A 245-amino-acid polypeptide reads, in one-letter code: MGLVWRSRTSLVGQLIGLVRLVASFAAQLFYRPSDAVAEEYHKWYYGNLVWTKTTYMGINCWKSVSDMWNYQEILSELQPSLVIEFGTRYGGSAVYFANIMRQIGQPFKVLTVDNSHKALDPRARREPDVLFVESSSTDPAIAEQIQRLKNEYPGKIFAILDSDHSMNHVLAEMKLLRPLLSAGDYLVVEDSNINGHPVLPGFGPGPYEAIEAYEDEFPNDYKHDAERENKFGWTSAPNGFLIRN.

The first 38 residues, 1–38 (MGLVWRSRTSLVGQLIGLVRLVASFAAQLFYRPSDAVA), serve as a signal peptide directing secretion.

It belongs to the rhamnosyl O-methyltransferase family.

Catalyzes the O-methylation of the hydroxyl group located on C-2 of the first rhamnosyl residue linked to the phenolic group of glycosylated phenolphthiocerol dimycocerosates (PGL) and p-hydroxybenzoic acid derivatives (p-HBAD). The sequence is that of Rhamnosyl O-methyltransferase from Mycobacterium bovis (strain ATCC BAA-935 / AF2122/97).